Reading from the N-terminus, the 338-residue chain is uncharacterized protein (338 aa).

The N-terminal stretch at 1–29 is a signal peptide; the sequence is MIKQLYKNITICSLAISTALTVFPATSYA.

This sequence belongs to the aerolysin family.

This is an uncharacterized protein from Staphylococcus aureus (strain Mu50 / ATCC 700699).